The sequence spans 350 residues: Alcohol dehydrogenase 1 (350 aa).

Positions 46, 69, 100, 103, 106, 114, and 156 each coordinate Zn(2+). NAD(+)-binding positions include 180–186 (GAGGGLG), Asp-204, Lys-209, 271–273 (VGL), and Arg-343.

This sequence belongs to the zinc-containing alcohol dehydrogenase family. Homotetramer. Requires Zn(2+) as cofactor.

Its subcellular location is the cytoplasm. It carries out the reaction a primary alcohol + NAD(+) = an aldehyde + NADH + H(+). It catalyses the reaction a secondary alcohol + NAD(+) = a ketone + NADH + H(+). The chain is Alcohol dehydrogenase 1 (ADH1) from Candida albicans (Yeast).